The primary structure comprises 441 residues: EP1-like glycoprotein 3 (441 aa).

A signal peptide spans 1 to 22 (MKFSITLALCFTLSIFLIGSQA). A Bulb-type lectin domain is found at 29–159 (QFRVVNEGGY…SGKFVWQSFD (131 aa)). N-linked (GlcNAc...) asparagine glycans are attached at residues Asn102, Asn258, and Asn269. One copy of the WD repeat lies at 254–296 (GSKFNVSTFLSRPKHNATLSFIRLESDGNIRVWSYSTLATSTA). The PAN domain occupies 356 to 433 (CDPKTFHYFK…SSLVAYVKAP (78 aa)). Intrachain disulfides connect Cys387/Cys409 and Cys391/Cys397.

Phosphorylated on tyrosine.

The protein localises to the secreted. It localises to the cell wall. In terms of biological role, may be involved in a cell-to cell programmed cell death (PCD) signaling mechanism. This chain is EP1-like glycoprotein 3, found in Arabidopsis thaliana (Mouse-ear cress).